Here is a 369-residue protein sequence, read N- to C-terminus: Methylthioribose-1-phosphate isomerase (369 aa).

Met1 carries the post-translational modification N-acetylmethionine. Arg158 carries the omega-N-methylarginine modification. Asp248 acts as the Proton donor in catalysis. Ser366 carries the phosphoserine modification.

It belongs to the eIF-2B alpha/beta/delta subunits family. MtnA subfamily.

The protein localises to the cytoplasm. It localises to the nucleus. The enzyme catalyses 5-(methylsulfanyl)-alpha-D-ribose 1-phosphate = 5-(methylsulfanyl)-D-ribulose 1-phosphate. The protein operates within amino-acid biosynthesis; L-methionine biosynthesis via salvage pathway; L-methionine from S-methyl-5-thio-alpha-D-ribose 1-phosphate: step 1/6. In terms of biological role, catalyzes the interconversion of methylthioribose-1-phosphate (MTR-1-P) into methylthioribulose-1-phosphate (MTRu-1-P). The sequence is that of Methylthioribose-1-phosphate isomerase (Mri1) from Rattus norvegicus (Rat).